The following is a 256-amino-acid chain: Small ribosomal subunit protein uS2 (256 aa).

This sequence belongs to the universal ribosomal protein uS2 family.

This Streptococcus equi subsp. equi (strain 4047) protein is Small ribosomal subunit protein uS2.